A 402-amino-acid polypeptide reads, in one-letter code: MPHPHNKKIQSFWLITGIIFIAFNLRPAITSVGPVISSIRAELHMSNGAAGFLTALPLLSFAVLSPLAPKLGQRLGNERTLWLGLVILLIGVLTRSTGYTAALFFGTALIGVGIAIGNVLLPSLIKHKYPEKPGIMISLYTTSMNIFAALASGVSVPLATQMNGGWKQAFLLWGGLALLALLIWIPQLRHRDTANQTMKLQSSSIWASKMAWYVTIFMGLQSFLFYSSIAWFPEILRSHGIDTATAGWMVSLMQFASLPSTFLTPVLADRVKQQRGIVAALASVYLIGLCGLLAGGSHTLLAIWMIIIGIGQGSSISLALTLIGLRSENAQQAAALSGMSQSFGYLLAAVGPIFVGYLFDQTHSWTMPIVLLIAALIVMGAAGQGAGRDRYIFQSEKQRNSA.

11 helical membrane passes run 12 to 32 (FWLITGIIFIAFNLRPAITSV), 48 to 68 (GAAGFLTALPLLSFAVLSPLA), 80 to 100 (TLWLGLVILLIGVLTRSTGYT), 101 to 121 (AALFFGTALIGVGIAIGNVLL), 134 to 154 (GIMISLYTTSMNIFAALASGV), 168 to 188 (QAFLLWGGLALLALLIWIPQL), 212 to 232 (WYVTIFMGLQSFLFYSSIAWF), 248 to 268 (WMVSLMQFASLPSTFLTPVLA), 291 to 311 (GLLAGGSHTLLAIWMIIIGIG), 339 to 359 (MSQSFGYLLAAVGPIFVGYLF), and 367 to 387 (MPIVLLIAALIVMGAAGQGAG).

The protein belongs to the major facilitator superfamily. Cyanate porter (TC 2.A.1.17) family.

The protein resides in the cell membrane. This is an uncharacterized protein from Bacillus subtilis (strain 168).